A 259-amino-acid polypeptide reads, in one-letter code: Glutamate racemase (259 aa).

Residues 9–10 (DS) and 41–42 (YG) contribute to the substrate site. Cys-73 serves as the catalytic Proton donor/acceptor. 74-75 (NT) is a binding site for substrate. Cys-183 acts as the Proton donor/acceptor in catalysis. 184-185 (TH) provides a ligand contact to substrate.

It belongs to the aspartate/glutamate racemases family.

It catalyses the reaction L-glutamate = D-glutamate. Its pathway is cell wall biogenesis; peptidoglycan biosynthesis. Functionally, provides the (R)-glutamate required for cell wall biosynthesis. This is Glutamate racemase from Shewanella frigidimarina (strain NCIMB 400).